The following is an 81-amino-acid chain: Toxin MIT1 (81 aa).

5 disulfides stabilise this stretch: C7–C19, C13–C31, C18–C59, C41–C67, and C61–C77.

This sequence belongs to the AVIT (prokineticin) family. Expressed by the venom gland.

Its subcellular location is the secreted. Potent agonist for both PKR1/PROKR1 and PKR2/PROKR2. Potently contracts gastrointestinal (GI) smooth muscle. This chain is Toxin MIT1, found in Dendroaspis polylepis polylepis (Black mamba).